A 71-amino-acid polypeptide reads, in one-letter code: DNA-directed RNA polymerase subunit omega (71 aa).

Belongs to the RNA polymerase subunit omega family. In terms of assembly, the RNAP catalytic core consists of 2 alpha, 1 beta, 1 beta' and 1 omega subunit. When a sigma factor is associated with the core the holoenzyme is formed, which can initiate transcription.

It catalyses the reaction RNA(n) + a ribonucleoside 5'-triphosphate = RNA(n+1) + diphosphate. In terms of biological role, promotes RNA polymerase assembly. Latches the N- and C-terminal regions of the beta' subunit thereby facilitating its interaction with the beta and alpha subunits. In Syntrophomonas wolfei subsp. wolfei (strain DSM 2245B / Goettingen), this protein is DNA-directed RNA polymerase subunit omega.